We begin with the raw amino-acid sequence, 290 residues long: 4-diphosphocytidyl-2-C-methyl-D-erythritol kinase (290 aa).

The active site involves Lys-14. 103 to 113 (PMGGGLGGGSS) contacts ATP. Residue Asp-145 is part of the active site.

Belongs to the GHMP kinase family. IspE subfamily. Homodimer.

It carries out the reaction 4-CDP-2-C-methyl-D-erythritol + ATP = 4-CDP-2-C-methyl-D-erythritol 2-phosphate + ADP + H(+). It participates in isoprenoid biosynthesis; isopentenyl diphosphate biosynthesis via DXP pathway; isopentenyl diphosphate from 1-deoxy-D-xylulose 5-phosphate: step 3/6. Catalyzes the phosphorylation of the position 2 hydroxy group of 4-diphosphocytidyl-2C-methyl-D-erythritol. This chain is 4-diphosphocytidyl-2-C-methyl-D-erythritol kinase, found in Pectobacterium carotovorum subsp. carotovorum (strain PC1).